Consider the following 276-residue polypeptide: Light-independent protochlorophyllide reductase iron-sulfur ATP-binding protein (276 aa).

ATP is bound by residues 12–17 and lysine 41; that span reads GIGKST. Residue serine 16 participates in Mg(2+) binding. Positions 97 and 131 each coordinate [4Fe-4S] cluster. 182–183 provides a ligand contact to ATP; it reads NR.

Belongs to the NifH/BchL/ChlL family. Homodimer. Protochlorophyllide reductase is composed of three subunits; BchL, BchN and BchB. Requires [4Fe-4S] cluster as cofactor.

The catalysed reaction is chlorophyllide a + oxidized 2[4Fe-4S]-[ferredoxin] + 2 ADP + 2 phosphate = protochlorophyllide a + reduced 2[4Fe-4S]-[ferredoxin] + 2 ATP + 2 H2O. It participates in porphyrin-containing compound metabolism; bacteriochlorophyll biosynthesis (light-independent). In terms of biological role, component of the dark-operative protochlorophyllide reductase (DPOR) that uses Mg-ATP and reduced ferredoxin to reduce ring D of protochlorophyllide (Pchlide) to form chlorophyllide a (Chlide). This reaction is light-independent. The L component serves as a unique electron donor to the NB-component of the complex, and binds Mg-ATP. This is Light-independent protochlorophyllide reductase iron-sulfur ATP-binding protein from Chlorobium chlorochromatii (strain CaD3).